Reading from the N-terminus, the 328-residue chain is Probable cell division protein WhiA (328 aa).

A DNA-binding region (H-T-H motif) is located at residues 275 to 308 (SLEELGQLHDPVLTKDAIAGRIRRLLAMADKRAE).

The protein belongs to the WhiA family.

Functionally, involved in cell division and chromosome segregation. The polypeptide is Probable cell division protein WhiA (Nocardioides sp. (strain ATCC BAA-499 / JS614)).